We begin with the raw amino-acid sequence, 564 residues long: Pumilio homolog 9 (564 aa).

The PUM-HD domain maps to 222-564 (LEDTVLIGQG…KIFSKTILKK (343 aa)). Pumilio repeat units follow at residues 249-284 (EIYGSVNLMAKDQIGCRVLQKLVEEGTFHEAKVILL), 285-320 (AIIDHVVELSMDPFGNYIVQKLFDVSDEEQRTLIVS), 321-359 (VLTSNPRELIRICLNTYGTRVVQKMIETVKTKQQIALVK), 361-396 (GLKPGFLALVKDLNGNHVIQSCLQTLGPNDNEFVLE), 397-432 (AATKYCAEIAIHRHGCCVLQCCISNSVGLQRERLVA), 433-469 (EISRNSLHLSQDPFGNYVVQYLIDQQVSAVKLLVQFR), 470-501 (MHYAELATQKFSSHVIEKCLRKYPESRAEIVR), and 502-539 (ELLCVPNFEYLLQDPYANYVIQTALSVTKGPVRAKLVA).

The protein resides in the cytoplasm. In terms of biological role, sequence-specific RNA-binding protein that regulates translation and mRNA stability by binding the 3'-UTR of target mRNAs. The sequence is that of Pumilio homolog 9 (APUM9) from Arabidopsis thaliana (Mouse-ear cress).